The chain runs to 515 residues: Maturase K (515 aa).

Belongs to the intron maturase 2 family. MatK subfamily.

The protein localises to the plastid. It is found in the chloroplast. Functionally, usually encoded in the trnK tRNA gene intron. Probably assists in splicing its own and other chloroplast group II introns. The sequence is that of Maturase K from Pinus koraiensis (Korean pine).